Reading from the N-terminus, the 498-residue chain is ATP synthase subunit beta, chloroplastic (498 aa).

An ATP-binding site is contributed by 172-179; it reads GGAGVGKT.

This sequence belongs to the ATPase alpha/beta chains family. F-type ATPases have 2 components, CF(1) - the catalytic core - and CF(0) - the membrane proton channel. CF(1) has five subunits: alpha(3), beta(3), gamma(1), delta(1), epsilon(1). CF(0) has four main subunits: a(1), b(1), b'(1) and c(9-12).

The protein resides in the plastid. The protein localises to the chloroplast thylakoid membrane. It carries out the reaction ATP + H2O + 4 H(+)(in) = ADP + phosphate + 5 H(+)(out). Functionally, produces ATP from ADP in the presence of a proton gradient across the membrane. The catalytic sites are hosted primarily by the beta subunits. The polypeptide is ATP synthase subunit beta, chloroplastic (Hyphaene coriacea (Ilala palm)).